Consider the following 226-residue polypeptide: UPF0758 protein SPT_1135 (226 aa).

The 123-residue stretch at 103 to 225 (SILSSQKLAK…YFSYREKTDL (123 aa)) folds into the MPN domain. Histidine 174, histidine 176, and aspartate 187 together coordinate Zn(2+). The JAMM motif signature appears at 174–187 (HNHPSGAVAPSQND).

It belongs to the UPF0758 family.

The sequence is that of UPF0758 protein SPT_1135 from Streptococcus pneumoniae (strain Taiwan19F-14).